The chain runs to 122 residues: uncharacterized protein (122 aa).

The protein belongs to the phage O protein family.

This is an uncharacterized protein from Escherichia coli O6:H1 (strain CFT073 / ATCC 700928 / UPEC).